Here is a 458-residue protein sequence, read N- to C-terminus: Divalent metal cation transporter MntH (458 aa).

11 consecutive transmembrane segments (helical) span residues 38–58 (GFWK…VGYM), 76–96 (SLLS…AMAA), 119–139 (GGFL…AEII), 151–171 (MPLI…LLLM), 180–200 (AVVA…VILA), 223–243 (MLYL…LFLG), 275–295 (LTMA…LFFG), 315–335 (IVGA…LLAS), 370–390 (LMSV…EAKI), 393–413 (LLTF…IPLV), and 437–457 (FISG…LGFV).

This sequence belongs to the NRAMP family.

The protein resides in the cell membrane. H(+)-stimulated, divalent metal cation uptake system. The polypeptide is Divalent metal cation transporter MntH (Lacticaseibacillus paracasei (strain ATCC 334 / BCRC 17002 / CCUG 31169 / CIP 107868 / KCTC 3260 / NRRL B-441) (Lactobacillus paracasei)).